Here is a 269-residue protein sequence, read N- to C-terminus: Undecaprenyl-diphosphatase (269 aa).

Helical transmembrane passes span W42–F62, L83–I103, P110–V130, G142–L162, A186–L206, A219–I239, and F247–I267.

It belongs to the UppP family.

It is found in the cell inner membrane. It catalyses the reaction di-trans,octa-cis-undecaprenyl diphosphate + H2O = di-trans,octa-cis-undecaprenyl phosphate + phosphate + H(+). Its function is as follows. Catalyzes the dephosphorylation of undecaprenyl diphosphate (UPP). Confers resistance to bacitracin. This is Undecaprenyl-diphosphatase from Caulobacter sp. (strain K31).